Consider the following 758-residue polypeptide: Photosystem I P700 chlorophyll a apoprotein A1 (758 aa).

A run of 8 helical transmembrane segments spans residues 78–101, 164–187, 203–227, 299–317, 354–377, 393–419, 441–463, and 539–557; these read VFSA…FHGA, LYCT…FHYH, LNHH…HVSL, IAHH…GHMY, WHAQ…QHMY, LSLF…IFMV, AIIS…LYIH, and FLVH…LILL. [4Fe-4S] cluster is bound by residues C581 and C590. 2 helical membrane passes run 597–618 and 672–694; these read HVFL…HFSW and LSAY…MFLF. H683 serves as a coordination point for chlorophyll a'. 2 residues coordinate chlorophyll a: M691 and Y699. Phylloquinone is bound at residue W700. The chain crosses the membrane as a helical span at residues 732–753; the sequence is AVGVTHYLLGGIATTWAFFLAR.

The protein belongs to the PsaA/PsaB family. As to quaternary structure, the PsaA/B heterodimer binds the P700 chlorophyll special pair and subsequent electron acceptors. PSI consists of a core antenna complex that captures photons, and an electron transfer chain that converts photonic excitation into a charge separation. The eukaryotic PSI reaction center is composed of at least 11 subunits. Requires P700 is a chlorophyll a/chlorophyll a' dimer, A0 is one or more chlorophyll a, A1 is one or both phylloquinones and FX is a shared 4Fe-4S iron-sulfur center. as cofactor.

Its subcellular location is the plastid. It is found in the chloroplast thylakoid membrane. The enzyme catalyses reduced [plastocyanin] + hnu + oxidized [2Fe-2S]-[ferredoxin] = oxidized [plastocyanin] + reduced [2Fe-2S]-[ferredoxin]. Its function is as follows. PsaA and PsaB bind P700, the primary electron donor of photosystem I (PSI), as well as the electron acceptors A0, A1 and FX. PSI is a plastocyanin-ferredoxin oxidoreductase, converting photonic excitation into a charge separation, which transfers an electron from the donor P700 chlorophyll pair to the spectroscopically characterized acceptors A0, A1, FX, FA and FB in turn. Oxidized P700 is reduced on the lumenal side of the thylakoid membrane by plastocyanin. This Pisum sativum (Garden pea) protein is Photosystem I P700 chlorophyll a apoprotein A1.